A 477-amino-acid chain; its full sequence is 3-succinoylsemialdehyde-pyridine dehydrogenase (477 aa).

Residue 202–208 participates in NAD(+) binding; that stretch reads GDGPGVG. Residues Glu-246 and Cys-280 contribute to the active site.

This sequence belongs to the aldehyde dehydrogenase family.

The catalysed reaction is 4-oxo-4-(pyridin-3-yl)butanal + NADP(+) + H2O = 4-oxo-4-(pyridin-3-yl)butanoate + NADPH + 2 H(+). It functions in the pathway alkaloid degradation; nicotine degradation. Catalyzes the dehydrogenation of 3-succinoylsemialdehyde-pyridine to 3-succinoyl-pyridine in the nicotine degradation pathway. The sequence is that of 3-succinoylsemialdehyde-pyridine dehydrogenase (ald) from Pseudomonas sp.